We begin with the raw amino-acid sequence, 144 residues long: Alpha-crystallin (144 aa).

The sHSP domain maps to 33 to 143 (PTFDTRLMRL…TEKHIQIRST (111 aa)).

It belongs to the small heat shock protein (HSP20) family.

It is found in the secreted. The protein resides in the cell wall. The protein localises to the cytoplasm. Acts as a chaperone. The protein is Alpha-crystallin (hspX) of Mycobacterium bovis (strain ATCC BAA-935 / AF2122/97).